A 349-amino-acid chain; its full sequence is tRNA uridine(34) hydroxylase (349 aa).

The Rhodanese domain maps to 146–240; it reads DDPDAVFIDM…YARKAREQGL (95 aa). The Cysteine persulfide intermediate role is filled by C200. The segment covering 314–328 has biased composition (basic and acidic residues); that stretch reads PEEEQRRRRAGRENG. The disordered stretch occupies residues 314–349; that stretch reads PEEEQRRRRAGRENGNKIFNKSRGRLNTTLGIPDPE.

It belongs to the TrhO family.

It carries out the reaction uridine(34) in tRNA + AH2 + O2 = 5-hydroxyuridine(34) in tRNA + A + H2O. In terms of biological role, catalyzes oxygen-dependent 5-hydroxyuridine (ho5U) modification at position 34 in tRNAs. The chain is tRNA uridine(34) hydroxylase from Cronobacter sakazakii (strain ATCC BAA-894) (Enterobacter sakazakii).